A 204-amino-acid chain; its full sequence is Minor allergen Alt a 7 (204 aa).

The 191-residue stretch at 5–195 (IAIVYYSMYG…NIAQAQGKAF (191 aa)) folds into the Flavodoxin-like domain.

It belongs to the WrbA family.

Its subcellular location is the cytoplasm. This is Minor allergen Alt a 7 (ALTA7) from Alternaria alternata (Alternaria rot fungus).